Reading from the N-terminus, the 443-residue chain is Xaa-Pro dipeptidase (443 aa).

Mn(2+) contacts are provided by Asp-246, Asp-257, His-339, Glu-384, and Glu-423.

This sequence belongs to the peptidase M24B family. Bacterial-type prolidase subfamily. Requires Mn(2+) as cofactor.

It carries out the reaction Xaa-L-Pro dipeptide + H2O = an L-alpha-amino acid + L-proline. In terms of biological role, splits dipeptides with a prolyl residue in the C-terminal position. The protein is Xaa-Pro dipeptidase of Escherichia coli (strain 55989 / EAEC).